A 469-amino-acid chain; its full sequence is Cysteine--tRNA ligase (469 aa).

Residue cysteine 28 coordinates Zn(2+). Residues 30–40 (CTVYDLCHIGH) carry the 'HIGH' region motif. Residues cysteine 216, histidine 241, and glutamate 245 each coordinate Zn(2+). Positions 273 to 277 (KMSKS) match the 'KMSKS' region motif. Residue lysine 276 coordinates ATP.

This sequence belongs to the class-I aminoacyl-tRNA synthetase family. In terms of assembly, monomer. The cofactor is Zn(2+).

It localises to the cytoplasm. The catalysed reaction is tRNA(Cys) + L-cysteine + ATP = L-cysteinyl-tRNA(Cys) + AMP + diphosphate. The chain is Cysteine--tRNA ligase from Colwellia psychrerythraea (strain 34H / ATCC BAA-681) (Vibrio psychroerythus).